We begin with the raw amino-acid sequence, 63 residues long: Large ribosomal subunit protein bL28 (63 aa).

This sequence belongs to the bacterial ribosomal protein bL28 family.

This Hydrogenobaculum sp. (strain Y04AAS1) protein is Large ribosomal subunit protein bL28.